Here is a 206-residue protein sequence, read N- to C-terminus: Small ribosomal subunit protein uS4 (206 aa).

The 61-residue stretch at 96–156 (GRLDNVVYRM…EKSKKQARIK (61 aa)) folds into the S4 RNA-binding domain.

The protein belongs to the universal ribosomal protein uS4 family. Part of the 30S ribosomal subunit. Contacts protein S5. The interaction surface between S4 and S5 is involved in control of translational fidelity.

Its function is as follows. One of the primary rRNA binding proteins, it binds directly to 16S rRNA where it nucleates assembly of the body of the 30S subunit. In terms of biological role, with S5 and S12 plays an important role in translational accuracy. The chain is Small ribosomal subunit protein uS4 from Mannheimia succiniciproducens (strain KCTC 0769BP / MBEL55E).